A 550-amino-acid polypeptide reads, in one-letter code: Probable endochitinase (550 aa).

The N-terminal stretch at M1–A16 is a signal peptide. 2 N-linked (GlcNAc...) asparagine; by host glycosylation sites follow: N146 and N172. A GH18 domain is found at K147 to K547. Catalysis depends on E304, which acts as the Proton donor. Residue N344 is glycosylated (N-linked (GlcNAc...) asparagine; by host). Residues K547–L550 carry the Prevents secretion from ER motif.

This sequence belongs to the glycosyl hydrolase 18 family. Chitinase class II subfamily.

It is found in the host endoplasmic reticulum lumen. It carries out the reaction Random endo-hydrolysis of N-acetyl-beta-D-glucosaminide (1-&gt;4)-beta-linkages in chitin and chitodextrins.. This is Probable endochitinase from Orgyia pseudotsugata (Douglas-fir tussock moth).